A 261-amino-acid chain; its full sequence is Large ribosomal subunit protein uL3 (261 aa).

A compositionally biased stretch (low complexity) spans 138–148; the sequence is SVSHRSHGSTG. Disordered stretches follow at residues 138–163 and 214–261; these read SVSHRSHGSTGQRQDPGRTFPGKKMA and ADAP…GDQA. Residue glutamine 151 is modified to N5-methylglutamine. Residues 227–261 are compositionally biased toward low complexity; sequence APTPVEAAADEAAPAEEPAVTEAPAAEATEAGDQA.

It belongs to the universal ribosomal protein uL3 family. In terms of assembly, part of the 50S ribosomal subunit. Forms a cluster with proteins L14 and L19. Methylated by PrmB.

In terms of biological role, one of the primary rRNA binding proteins, it binds directly near the 3'-end of the 23S rRNA, where it nucleates assembly of the 50S subunit. In Phenylobacterium zucineum (strain HLK1), this protein is Large ribosomal subunit protein uL3.